Here is a 174-residue protein sequence, read N- to C-terminus: MSTRKLNMLTPEPIHLLEEGGDNSEEFVVDEGCQVQRIYVGDGSITTSDEAKFTIWKVTTELIVHKVEPVRVSIPLEIVSYRRYSEFDQLRAEIISKIGKNVQVPELPPKVYWYDYWRFSKINLNRHWLNKRRQGLDNFINKIIKNKDIMESCAKEVNEFLGVSSDVSTRTNSE.

A PX domain is found at 34 to 168; the sequence is QVQRIYVGDG…EFLGVSSDVS (135 aa).

This sequence belongs to the YPT35 family.

Its subcellular location is the endosome membrane. It is found in the vacuole membrane. In terms of biological role, recruits the lipid transfer protein VPS13 to endosomal and vacuolar membranes. The protein is Endosomal/vacuolar adapter protein YPT35 (YPT35) of Vanderwaltozyma polyspora (strain ATCC 22028 / DSM 70294 / BCRC 21397 / CBS 2163 / NBRC 10782 / NRRL Y-8283 / UCD 57-17) (Kluyveromyces polysporus).